Here is a 186-residue protein sequence, read N- to C-terminus: Elongation factor P (186 aa).

The protein belongs to the elongation factor P family.

It is found in the cytoplasm. The protein operates within protein biosynthesis; polypeptide chain elongation. In terms of biological role, involved in peptide bond synthesis. Stimulates efficient translation and peptide-bond synthesis on native or reconstituted 70S ribosomes in vitro. Probably functions indirectly by altering the affinity of the ribosome for aminoacyl-tRNA, thus increasing their reactivity as acceptors for peptidyl transferase. This is Elongation factor P from Ruminiclostridium cellulolyticum (strain ATCC 35319 / DSM 5812 / JCM 6584 / H10) (Clostridium cellulolyticum).